We begin with the raw amino-acid sequence, 237 residues long: Ribosomal RNA small subunit methyltransferase G (237 aa).

Residues G78, F83, 129–130 (AE), and R148 each bind S-adenosyl-L-methionine. The disordered stretch occupies residues 218–237 (KKETPNKYPRKAGMPNKRPL).

This sequence belongs to the methyltransferase superfamily. RNA methyltransferase RsmG family.

Its subcellular location is the cytoplasm. Its function is as follows. Specifically methylates the N7 position of a guanine in 16S rRNA. This is Ribosomal RNA small subunit methyltransferase G from Streptococcus sanguinis (strain SK36).